The following is a 453-amino-acid chain: Homogentisate 1,2-dioxygenase (453 aa).

His306 serves as the catalytic Proton acceptor. Residues His349 and Glu355 each contribute to the Fe cation site. 2 residues coordinate homogentisate: Tyr364 and His385. Residue His385 coordinates Fe cation.

The protein belongs to the homogentisate dioxygenase family. As to quaternary structure, hexamer; dimer of trimers. The cofactor is Fe cation.

The catalysed reaction is homogentisate + O2 = 4-maleylacetoacetate + H(+). Its pathway is amino-acid degradation; L-phenylalanine degradation; acetoacetate and fumarate from L-phenylalanine: step 4/6. Functionally, involved in the catabolism of homogentisate (2,5-dihydroxyphenylacetate or 2,5-OH-PhAc), a central intermediate in the degradation of phenylalanine and tyrosine. Catalyzes the oxidative ring cleavage of the aromatic ring of homogentisate to yield maleylacetoacetate. This Rhizobium rhizogenes (strain K84 / ATCC BAA-868) (Agrobacterium radiobacter) protein is Homogentisate 1,2-dioxygenase.